Here is a 319-residue protein sequence, read N- to C-terminus: Cytochrome c biogenesis protein CcsA (319 aa).

Transmembrane regions (helical) follow at residues 9 to 29 (ILTH…LITL), 44 to 64 (GVIG…AYSG), 71 to 91 (LYES…FPYF), 143 to 163 (MVLG…LLVI), 225 to 245 (IISL…VWAN), 259 to 273 (TWAF…IYLH), and 286 to 306 (AIVA…VNLL).

It belongs to the CcmF/CycK/Ccl1/NrfE/CcsA family. As to quaternary structure, may interact with Ccs1.

Its subcellular location is the plastid. It localises to the chloroplast thylakoid membrane. Functionally, required during biogenesis of c-type cytochromes (cytochrome c6 and cytochrome f) at the step of heme attachment. This is Cytochrome c biogenesis protein CcsA from Oenothera glazioviana (Large-flowered evening primrose).